The following is a 285-amino-acid chain: Tumor necrosis factor ligand superfamily member 13B (285 aa).

Topologically, residues 1–46 are cytoplasmic; sequence MDDSTEREQSRLTSCLKKREEMKLKECVSILPRKESPSVRSSKDGK. The helical; Signal-anchor for type II membrane protein transmembrane segment at 47–67 threads the bilayer; that stretch reads LLAATLLLALLSCCLTVVSFY. The Extracellular portion of the chain corresponds to 68 to 285; it reads QVAALQGDLA…VTFFGALKLL (218 aa). The tract at residues 114–138 is disordered; sequence IFEPPAPGEGNSSQNSRNKRAVQGP. N124 carries an N-linked (GlcNAc...) asparagine glycan. One can recognise a THD domain in the interval 145 to 284; sequence DCLQLIADSE…DVTFFGALKL (140 aa). A disulfide bond links C232 and C245. An N-linked (GlcNAc...) (high mannose) asparagine glycan is attached at N242.

It belongs to the tumor necrosis factor family. As to quaternary structure, homotrimer. Isoform 2 heteromultimerizes with isoform 1, probably limiting the amount of functional isoform 1 on the cell surface. Isoform 3 is unlikely form trimers or bind to BAFF receptors. In terms of processing, the soluble form derives from the membrane form by proteolytic processing. Post-translationally, isoform 2 is not efficiently shed from the membrane unlike isoform 1. N-glycosylated. As to expression, abundantly expressed in peripheral blood Leukocytes and is specifically expressed in monocytes and macrophages. Also found in the spleen, lymph node, bone marrow, T-cells and dendritic cells. A lower expression seen in placenta, heart, lung, fetal liver, thymus, and pancreas. Isoform 2 is expressed in many myeloid cell lines.

Its subcellular location is the cell membrane. It is found in the secreted. Cytokine that binds to TNFRSF13B/TACI and TNFRSF17/BCMA. TNFSF13/APRIL binds to the same 2 receptors. Together, they form a 2 ligands -2 receptors pathway involved in the stimulation of B- and T-cell function and the regulation of humoral immunity. A third B-cell specific BAFF-receptor (BAFFR/BR3) promotes the survival of mature B-cells and the B-cell response. Functionally, isoform 2 seems to inhibit isoform 1 secretion and bioactivity. In terms of biological role, acts as a transcription factor for its own parent gene, in association with NF-kappa-B p50 subunit, at least in autoimmune and proliferative B-cell diseases. The presence of Delta4BAFF is essential for soluble BAFF release by IFNG/IFN-gamma-stimulated monocytes and for B-cell survival. It can directly or indirectly regulate the differential expression of a large number of genes involved in the innate immune response and the regulation of apoptosis. This Homo sapiens (Human) protein is Tumor necrosis factor ligand superfamily member 13B (TNFSF13B).